A 256-amino-acid chain; its full sequence is MTDQRKGSDAEPTTHFGFKNVPESQKAEKVAEVFHSVAAKYDLMNDLLSGGMHRLWKRFAIELSGVRAGNRVLDIAGGTGDLTKKFSHLVGPTGQVVLADINESMLKVGRDRLLDVGVSGNVEFVQADAEKLPFPDNHFDCVTIAFGLRNVTHKEDALRSMLRVLKPGGRLLVLEFSKPTNALMSKAYDAYSFAFMPLMGKLITNDSESYRYLAESIRMHPNQETLKSMMVDAGFDRVTYHNMTAGIVALHRGIKP.

Residues Thr79, Asp100, and 128-129 (DA) contribute to the S-adenosyl-L-methionine site.

It belongs to the class I-like SAM-binding methyltransferase superfamily. MenG/UbiE family.

It catalyses the reaction a 2-demethylmenaquinol + S-adenosyl-L-methionine = a menaquinol + S-adenosyl-L-homocysteine + H(+). The catalysed reaction is a 2-methoxy-6-(all-trans-polyprenyl)benzene-1,4-diol + S-adenosyl-L-methionine = a 5-methoxy-2-methyl-3-(all-trans-polyprenyl)benzene-1,4-diol + S-adenosyl-L-homocysteine + H(+). The protein operates within quinol/quinone metabolism; menaquinone biosynthesis; menaquinol from 1,4-dihydroxy-2-naphthoate: step 2/2. It functions in the pathway cofactor biosynthesis; ubiquinone biosynthesis. In terms of biological role, methyltransferase required for the conversion of demethylmenaquinol (DMKH2) to menaquinol (MKH2) and the conversion of 2-polyprenyl-6-methoxy-1,4-benzoquinol (DDMQH2) to 2-polyprenyl-3-methyl-6-methoxy-1,4-benzoquinol (DMQH2). This is Ubiquinone/menaquinone biosynthesis C-methyltransferase UbiE from Pseudomonas fluorescens (strain Pf0-1).